A 595-amino-acid polypeptide reads, in one-letter code: Aspartate--tRNA(Asp/Asn) ligase (595 aa).

Residue E175 coordinates L-aspartate. Residues 199–202 (QQYK) are aspartate. Residues R221 and H454 each coordinate L-aspartate. 221–223 (RDE) contacts ATP. An ATP-binding site is contributed by E488. R495 contacts L-aspartate. 540–543 (GIDR) serves as a coordination point for ATP.

This sequence belongs to the class-II aminoacyl-tRNA synthetase family. Type 1 subfamily. Homodimer.

It is found in the cytoplasm. It carries out the reaction tRNA(Asx) + L-aspartate + ATP = L-aspartyl-tRNA(Asx) + AMP + diphosphate. Its function is as follows. Aspartyl-tRNA synthetase with relaxed tRNA specificity since it is able to aspartylate not only its cognate tRNA(Asp) but also tRNA(Asn). Reaction proceeds in two steps: L-aspartate is first activated by ATP to form Asp-AMP and then transferred to the acceptor end of tRNA(Asp/Asn). The chain is Aspartate--tRNA(Asp/Asn) ligase from Agrobacterium fabrum (strain C58 / ATCC 33970) (Agrobacterium tumefaciens (strain C58)).